Here is a 337-residue protein sequence, read N- to C-terminus: L-Ala-D/L-amino acid epimerase (337 aa).

Residues Thr-129 and 151–153 each bind substrate; that span reads KIK. The Mg(2+) site is built by Asp-177, Glu-203, and Asp-228. Residues Lys-250 and 300–302 each bind substrate; that span reads DMD.

It belongs to the mandelate racemase/muconate lactonizing enzyme family. Requires Mg(2+) as cofactor.

Broad specificity dipeptide epimerase. Catalyzes the epimerization of L-Ala-L-Ala, L-Ala-L-Glu, L-Ala-L-Ser, L-Ala-L-Thr and L-Ala-L-Met (in vitro). This chain is L-Ala-D/L-amino acid epimerase, found in Maribacter sp. (strain HTCC2170 / KCCM 42371).